A 343-amino-acid polypeptide reads, in one-letter code: Ribosomal RNA small subunit methyltransferase C (343 aa).

Belongs to the methyltransferase superfamily. RsmC family. Monomer.

The protein resides in the cytoplasm. It catalyses the reaction guanosine(1207) in 16S rRNA + S-adenosyl-L-methionine = N(2)-methylguanosine(1207) in 16S rRNA + S-adenosyl-L-homocysteine + H(+). Specifically methylates the guanine in position 1207 of 16S rRNA in the 30S particle. The chain is Ribosomal RNA small subunit methyltransferase C from Shewanella sediminis (strain HAW-EB3).